Reading from the N-terminus, the 161-residue chain is Regulator of ribonuclease activity A (161 aa).

This sequence belongs to the RraA family. Homotrimer. Binds to both RNA-binding sites in the C-terminal region of Rne and to RhlB.

The protein resides in the cytoplasm. Functionally, globally modulates RNA abundance by binding to RNase E (Rne) and regulating its endonucleolytic activity. Can modulate Rne action in a substrate-dependent manner by altering the composition of the degradosome. Modulates RNA-binding and helicase activities of the degradosome. In Tolumonas auensis (strain DSM 9187 / NBRC 110442 / TA 4), this protein is Regulator of ribonuclease activity A.